The chain runs to 506 residues: Carboxyl-terminal PDZ ligand of neuronal nitric oxide synthase protein (506 aa).

Positions 26 to 196 (FQHGICFEAK…ESERNSNSSG (171 aa)) constitute a PID domain. 2 disordered regions span residues 175–224 (HTQQ…VEVP) and 241–260 (DAVGKEGGSHTGSKVSHPQE). 3 positions are modified to phosphoserine: Ser188, Ser192, and Ser195. A compositionally biased stretch (low complexity) spans 203–213 (TGAERASTATA). Phosphoserine is present on Ser266. A coiled-coil region spans residues 322-363 (AAEAAARLEAQARVHQLLLQNKDMLQHISLLVKQVQELELKL). Phosphoserine occurs at positions 371, 374, 401, and 417. The interaction with NOS1 stretch occupies residues 494 to 506 (QELGDGLDDEIAV). The PDZ-binding motif lies at 504–506 (IAV).

As to quaternary structure, interacts with the PDZ domain of NOS1 or the second PDZ domain of DLG4 through its C-terminus. Interacts with RASD1 and SYN1, SYN2 and SYN3 via its PID domain. Forms a ternary complex with NOS1 and RASD1. Forms a ternary complex with NOS1 and SYN1. As to expression, expressed in kidney glomeruli podocytes.

It localises to the cell projection. It is found in the filopodium. Its subcellular location is the podosome. Its function is as follows. Adapter protein involved in neuronal nitric-oxide (NO) synthesis regulation via its association with nNOS/NOS1. The complex formed with NOS1 and synapsins is necessary for specific NO and synapsin functions at a presynaptic level. Mediates an indirect interaction between NOS1 and RASD1 leading to enhance the ability of NOS1 to activate RASD1. Competes with DLG4 for interaction with NOS1, possibly affecting NOS1 activity by regulating the interaction between NOS1 and DLG4. In kidney podocytes, plays a role in podosomes and filopodia formation through CDC42 activation. The polypeptide is Carboxyl-terminal PDZ ligand of neuronal nitric oxide synthase protein (Homo sapiens (Human)).